We begin with the raw amino-acid sequence, 424 residues long: Chloroquine resistance transporter (424 aa).

Over 1-58 (MKFASKKNNQKNSSKNDERYRELDNLVQEGNGSRLGGGSCLGKCAHVFKLIFKEIKDN) the chain is Cytoplasmic. Residues 59–79 (IFIYILSIIYLSVCVMNKIFA) traverse the membrane as a helical segment. Over 80–90 (KRTLNKIGNYS) the chain is Vacuolar. A glycan (N-linked (GlcNAc...) asparagine) is linked at Asn88. A helical membrane pass occupies residues 91-111 (FVTSETHNFICMIMFFIVYSL). Residues 112-127 (FGNKKGNSKERHRSFN) lie on the Cytoplasmic side of the membrane. The helical transmembrane segment at 128-148 (LQFFAISMLDACSVILAFIGL) threads the bilayer. Over 149-154 (TRTTGN) the chain is Vacuolar. The helical transmembrane segment at 155 to 175 (IQSFVLQLSIPINMFFCFLIL) threads the bilayer. At 176-178 (RYR) the chain is on the cytoplasmic side. A helical transmembrane segment spans residues 179–199 (YHLYNYLGAVIIVVTIALVEM). Topologically, residues 200 to 209 (KLSFETQEEN) are vacuolar. A helical membrane pass occupies residues 210–230 (SIIFNLVLISALIPVCFSNMT). Over 231–248 (REIVFKKYKIDILRLNAM) the chain is Cytoplasmic. The helical transmembrane segment at 249–269 (VSFFQLFTSCLILPVYTLPFL) threads the bilayer. The Vacuolar portion of the chain corresponds to 270–317 (KQLHLPYNEIWTNIKNGFACLFLGRNTVVENCGLGMAKLCDDCDGAWK). 2 disulfides stabilise this stretch: Cys289–Cys312 and Cys301–Cys309. The chain crosses the membrane as a helical span at residues 318 to 338 (TFALFSFFNICDNLITSYIID). Over 339-346 (KFSTMTYT) the chain is Cytoplasmic. A helical transmembrane segment spans residues 347 to 367 (IVSCIQGPAIAIAYYFKFLAG). The Vacuolar portion of the chain corresponds to 368 to 377 (DVVREPRLLD). A helical transmembrane segment spans residues 378–398 (FVTLFGYLFGSIIYRVGNIIL). Topologically, residues 399–424 (ERKKMRNEENEDSEGELTNVDSIITQ) are cytoplasmic.

Belongs to the CRT-like transporter family. Monomer.

Its subcellular location is the vacuole membrane. The catalysed reaction is L-arginine(in) = L-arginine(out). The enzyme catalyses L-lysine(in) = L-lysine(out). It carries out the reaction L-histidine(out) = L-histidine(in). It catalyses the reaction histamine(out) = histamine(in). The catalysed reaction is spermidine(in) = spermidine(out). The enzyme catalyses Fe(3+)(in) = Fe(3+)(out). It carries out the reaction Fe(2+)(in) = Fe(2+)(out). Transporter activity is trans-stimulated by host-derived peptides containing 4-11 amino acids. Trans-stimulation by hemoglobin-derived peptide VDPVNF is pH-dependent and sodium-independent. Saquinavir trans-stimulates transport of hemoglobin-derived peptide VDPVNF. Protons are non-competitive inhibitors of chloroquine transport. In terms of biological role, nutrient transporter. Substrate transport is pH-dependent. Can transport arginine, lysine, histidine, peptides, histamine and spermidine. May modulate activity of endogenous transporters. Involved in maintaining the osmotic homeostasis of the digestive vacuole. Required for the asexual intraerythrocytic proliferation of parasites. Can transport Fe(2+) and Fe(3+). The polypeptide is Chloroquine resistance transporter (Plasmodium falciparum).